The following is a 491-amino-acid chain: Cytochrome P450 2C40 (491 aa).

The signal sequence occupies residues 1–25 (MDPFVVLVLCLSFLLVLSLWRQRSA). Cys435 is a heme binding site.

Belongs to the cytochrome P450 family. The cofactor is heme. Liver, brain, kidney, and intestine, with trace amounts in lung and heart. Expressed throughout the intestinal tract, with higher expression levels in jejunum, cecum and colon.

The protein localises to the endoplasmic reticulum membrane. It localises to the microsome membrane. It carries out the reaction (5Z,8Z,11Z,14Z)-eicosatetraenoate + reduced [NADPH--hemoprotein reductase] + O2 = 16(R)-hydroxy-(5Z,8Z,11Z,14Z)-eicosatetraenoate + oxidized [NADPH--hemoprotein reductase] + H2O + H(+). It catalyses the reaction (5Z,8Z,11Z,14Z)-eicosatetraenoate + reduced [NADPH--hemoprotein reductase] + O2 = 16(S)-hydroxy-(5Z,8Z,11Z,14Z)-eicosatetraenoate + oxidized [NADPH--hemoprotein reductase] + H2O + H(+). The catalysed reaction is (5Z,8Z,11Z,14Z)-eicosatetraenoate + reduced [NADPH--hemoprotein reductase] + O2 = (14R,15S)-epoxy-(5Z,8Z,11Z)-eicosatrienoate + oxidized [NADPH--hemoprotein reductase] + H2O + H(+). The enzyme catalyses (5Z,8Z,11Z,14Z)-eicosatetraenoate + reduced [NADPH--hemoprotein reductase] + O2 = (14S,15R)-epoxy-(5Z,8Z,11Z)-eicosatrienoate + oxidized [NADPH--hemoprotein reductase] + H2O + H(+). It participates in lipid metabolism; arachidonate metabolism. Functionally, a cytochrome P450 monooxygenase that may play a major role in the metabolism of arachidonic acid in the intestinal tract. Exhibits regioselective hydroxylase and epoxidase activity toward arachidonic acid, producing 16(R)-hydroxyeicosatetraenoic acid (HETE) and (14R,15S)-epoxyeicosatrienoic acid (EpETrE) as major products. Mechanistically, uses molecular oxygen inserting one oxygen atom into a substrate, and reducing the second into a water molecule, with two electrons provided by NADPH via cytochrome P450 reductase (CPR; NADPH-ferrihemoprotein reductase). In Mus musculus (Mouse), this protein is Cytochrome P450 2C40.